A 692-amino-acid polypeptide reads, in one-letter code: Methionine--tRNA ligase (692 aa).

The 'HIGH' region signature appears at Pro15 to His25. Residues Cys146, Cys149, Cys159, and Cys162 each coordinate Zn(2+). Positions Lys332–Ser336 match the 'KMSKS' region motif. Position 335 (Lys335) interacts with ATP. The disordered stretch occupies residues Thr552–Pro577. The span at Ala556–Glu566 shows a compositional bias: basic and acidic residues. A tRNA-binding domain is found at Asp591–Lys692.

It belongs to the class-I aminoacyl-tRNA synthetase family. MetG type 1 subfamily. As to quaternary structure, homodimer. Zn(2+) is required as a cofactor.

Its subcellular location is the cytoplasm. It catalyses the reaction tRNA(Met) + L-methionine + ATP = L-methionyl-tRNA(Met) + AMP + diphosphate. Functionally, is required not only for elongation of protein synthesis but also for the initiation of all mRNA translation through initiator tRNA(fMet) aminoacylation. This Shewanella sediminis (strain HAW-EB3) protein is Methionine--tRNA ligase.